Reading from the N-terminus, the 243-residue chain is uncharacterized protein (243 aa).

One can recognise a GP-PDE domain in the interval 2-240 (TKIFAHRGAS…DFPEKASALL (239 aa)).

This is an uncharacterized protein from Bacillus subtilis (strain 168).